Consider the following 316-residue polypeptide: Protein U25 (316 aa).

This sequence belongs to the herpesviridae US22 family.

This chain is Protein U25 (U25), found in Human herpesvirus 6B (HHV-6 variant B).